The sequence spans 75 residues: U6-lycotoxin-Ls1b (75 aa).

The signal sequence occupies residues methionine 1–alanine 21. The propeptide occupies glutamate 22–arginine 25.

It belongs to the neurotoxin 19 (CSTX) family. 06 (U6-Lctx) subfamily. Contains 4 disulfide bonds. As to expression, expressed by the venom gland.

The protein localises to the secreted. In Lycosa singoriensis (Wolf spider), this protein is U6-lycotoxin-Ls1b.